The primary structure comprises 170 residues: Cysteine-rich venom protein VAR4 (170 aa).

Residues 1 to 22 (MILLKLYLTLAAILCQSRGTTS) form the signal peptide. Residues 41–169 (NKHNDLRRTV…PLKYFLVCQY (129 aa)) form the SCP domain. 3 disulfide bridges follow: cysteine 77/cysteine 156, cysteine 95/cysteine 170, and cysteine 151/cysteine 167.

The protein belongs to the CRISP family. Post-translationally, contains 8 disulfide bonds. In terms of tissue distribution, expressed by the venom gland.

The protein localises to the secreted. Its function is as follows. Blocks ryanodine receptors, and potassium channels. The protein is Cysteine-rich venom protein VAR4 of Varanus acanthurus (Ridge-tailed monitor).